The following is a 256-amino-acid chain: Undecaprenyl-diphosphatase (256 aa).

The next 8 helical transmembrane spans lie at isoleucine 5–serine 25, asparagine 41–phenylalanine 61, leucine 74–serine 94, leucine 100–tyrosine 120, leucine 135–valine 155, phenylalanine 180–glycine 200, leucine 208–leucine 228, and phenylalanine 234–isoleucine 254.

It belongs to the UppP family.

The protein localises to the cell inner membrane. It catalyses the reaction di-trans,octa-cis-undecaprenyl diphosphate + H2O = di-trans,octa-cis-undecaprenyl phosphate + phosphate + H(+). Its function is as follows. Catalyzes the dephosphorylation of undecaprenyl diphosphate (UPP). Confers resistance to bacitracin. The chain is Undecaprenyl-diphosphatase from Pelagibacter ubique (strain HTCC1062).